Reading from the N-terminus, the 406-residue chain is Tyrosine--tRNA ligase (406 aa).

Tyr-35 contributes to the L-tyrosine binding site. A 'HIGH' region motif is present at residues 40 to 49; sequence PTADSLHVGH. Tyr-168 and Gln-172 together coordinate L-tyrosine. A 'KMSKS' region motif is present at residues 228–232; sequence KMGKT. Lys-231 is a binding site for ATP. Residues 340-404 form the S4 RNA-binding domain; the sequence is AELLDILVEA…RGKKNYNKIV (65 aa).

The protein belongs to the class-I aminoacyl-tRNA synthetase family. TyrS type 1 subfamily. As to quaternary structure, homodimer.

The protein localises to the cytoplasm. It catalyses the reaction tRNA(Tyr) + L-tyrosine + ATP = L-tyrosyl-tRNA(Tyr) + AMP + diphosphate + H(+). Its function is as follows. Catalyzes the attachment of tyrosine to tRNA(Tyr) in a two-step reaction: tyrosine is first activated by ATP to form Tyr-AMP and then transferred to the acceptor end of tRNA(Tyr). The protein is Tyrosine--tRNA ligase of Clostridium perfringens (strain 13 / Type A).